The sequence spans 415 residues: von Willebrand factor A domain-containing protein 1 (415 aa).

An N-terminal signal peptide occupies residues 1–18 (MLFWTVLSMALSLRLALA). The VWFA domain maps to 34–213 (DLLFLLDSSA…ELRGAIIDAM (180 aa)). Phosphoserine is present on residues S74, S80, and S93. Fibronectin type-III domains lie at 214–305 (QPHQ…LQEE) and 307–405 (GPER…VPQA). N-linked (GlcNAc...) asparagine glycosylation occurs at N264. C369 and C393 form a disulfide bridge.

Homodimer or homomultimer; disulfide-linked. Interacts with HSPG2. In terms of processing, N-glycosylated.

It localises to the secreted. The protein localises to the extracellular space. Its subcellular location is the extracellular matrix. It is found in the basement membrane. Promotes matrix assembly. Involved in the organization of skeletal muscles and in the formation of neuromuscular junctions. This chain is von Willebrand factor A domain-containing protein 1 (Vwa1), found in Rattus norvegicus (Rat).